The sequence spans 222 residues: Transmembrane reductase CYB561D2 (222 aa).

Residues 2–17 (ALSVETESHIYRALRT) lie on the Cytoplasmic side of the membrane. The Cytochrome b561 domain occupies 14–217 (ALRTVSGAAA…NQVSNAYLYR (204 aa)). The helical transmembrane segment at 18–38 (VSGAAAHLVALGFTIFVAVLA) threads the bilayer. The Lumenal portion of the chain corresponds to 39–46 (RPGSSLFS). The chain crosses the membrane as a helical span at residues 47–67 (WHPVLMSLAFSFLMTEALLVF). H48 provides a ligand contact to heme b. Topologically, residues 68-85 (SPESSLLRSLSRKGRARC) are cytoplasmic. Heme b-binding residues include H86 and H120. The chain crosses the membrane as a helical span at residues 86-106 (HWVLQLLALLCALLGLGLVIL). The Lumenal portion of the chain corresponds to 107–122 (HKEQLGKAHLATWHGR). Residues 123–143 (AGLLAVLWAGLQCSGGVGLLY) traverse the membrane as a helical segment. The Cytoplasmic portion of the chain corresponds to 144–162 (PKLLPRWPLAKLKLYHATS). H159 provides a ligand contact to heme b. A helical membrane pass occupies residues 163-183 (GLVGYLLGGASLLLGMCSLWF). The Lumenal portion of the chain corresponds to 184–186 (TAT). The helical transmembrane segment at 187-207 (VTGGVWYLAVLCPVITSLVIM) threads the bilayer. Over 208–222 (NQVSNAYLYRKRIQP) the chain is Cytoplasmic.

The cofactor is heme b.

The protein resides in the endoplasmic reticulum membrane. Its subcellular location is the cytoplasmic vesicle membrane. The catalysed reaction is monodehydro-L-ascorbate radical(out) + L-ascorbate(in) = monodehydro-L-ascorbate radical(in) + L-ascorbate(out). It catalyses the reaction Fe(3+)(out) + L-ascorbate(in) = monodehydro-L-ascorbate radical(in) + Fe(2+)(out) + H(+). Transmembrane reductase that may use ascorbate as an electron donor in the cytoplasm and transfer electrons across endoplasmic reticulum membranes to reduce monodehydro-L-ascorbate radical and iron cations Fe(3+) in the lumen of that compartment. The chain is Transmembrane reductase CYB561D2 from Bos taurus (Bovine).